Here is a 104-residue protein sequence, read N- to C-terminus: Large ribosomal subunit protein uL24 (104 aa).

It belongs to the universal ribosomal protein uL24 family. In terms of assembly, part of the 50S ribosomal subunit.

Functionally, one of two assembly initiator proteins, it binds directly to the 5'-end of the 23S rRNA, where it nucleates assembly of the 50S subunit. One of the proteins that surrounds the polypeptide exit tunnel on the outside of the subunit. The chain is Large ribosomal subunit protein uL24 from Corynebacterium diphtheriae (strain ATCC 700971 / NCTC 13129 / Biotype gravis).